A 176-amino-acid polypeptide reads, in one-letter code: NAD(P)H-quinone oxidoreductase subunit 6, chloroplastic (176 aa).

Helical transmembrane passes span 10–30 (FLLV…VLFP), 32–52 (PIYS…FYIL), 61–81 (AQLL…VMFL), 105–125 (ISLF…GIIW), and 153–173 (FLPF…AIVI).

This sequence belongs to the complex I subunit 6 family. NDH is composed of at least 16 different subunits, 5 of which are encoded in the nucleus.

The protein localises to the plastid. The protein resides in the chloroplast thylakoid membrane. The catalysed reaction is a plastoquinone + NADH + (n+1) H(+)(in) = a plastoquinol + NAD(+) + n H(+)(out). It catalyses the reaction a plastoquinone + NADPH + (n+1) H(+)(in) = a plastoquinol + NADP(+) + n H(+)(out). Its function is as follows. NDH shuttles electrons from NAD(P)H:plastoquinone, via FMN and iron-sulfur (Fe-S) centers, to quinones in the photosynthetic chain and possibly in a chloroplast respiratory chain. The immediate electron acceptor for the enzyme in this species is believed to be plastoquinone. Couples the redox reaction to proton translocation, and thus conserves the redox energy in a proton gradient. This Ipomoea purpurea (Common morning glory) protein is NAD(P)H-quinone oxidoreductase subunit 6, chloroplastic (ndhG).